The sequence spans 128 residues: Glycine cleavage system H protein (128 aa).

In terms of domain architecture, Lipoyl-binding spans 23–105; it reads VATVGISDHA…YEGGWLFKVQ (83 aa). Lys-64 bears the N6-lipoyllysine mark.

Belongs to the GcvH family. As to quaternary structure, the glycine cleavage system is composed of four proteins: P, T, L and H. (R)-lipoate serves as cofactor.

In terms of biological role, the glycine cleavage system catalyzes the degradation of glycine. The H protein shuttles the methylamine group of glycine from the P protein to the T protein. In Alcanivorax borkumensis (strain ATCC 700651 / DSM 11573 / NCIMB 13689 / SK2), this protein is Glycine cleavage system H protein.